We begin with the raw amino-acid sequence, 537 residues long: Sodium/hydrogen exchanger 9B2 (537 aa).

Positions 1 to 10 (MGDEDKRITY) are enriched in basic and acidic residues. Residues 1–33 (MGDEDKRITYEDSEPSTGMNYTPSMHQETQEET) are disordered. At 1–86 (MGDEDKRITY…ACPPHGLLDR (86 aa)) the chain is on the cytoplasmic side. Positions 15-27 (PSTGMNYTPSMHQ) are enriched in polar residues. S49 bears the Phosphoserine mark. A helical transmembrane segment spans residues 87–104 (VVTNVTIIVLLWAVIWSI). Topologically, residues 105–113 (TGSECLPGG) are extracellular. The helical transmembrane segment at 114–133 (NLFGIIILFYCAIIGGKLLG) threads the bilayer. Over 134-144 (LIKLPTLPPLP) the chain is Cytoplasmic. Residues 145–161 (SLLGMLLAGFLIRNIPV) form a helical membrane-spanning segment. The Extracellular portion of the chain corresponds to 162–171 (INDNVQIKHK). A helical transmembrane segment spans residues 172 to 189 (WSSSLRSIALSIILVRAG). Over 190–200 (LGLDSKALKKL) the chain is Cytoplasmic. A helical transmembrane segment spans residues 201 to 227 (KGVCVRLSMGPCIVEACTSALLAHYLL). The Extracellular portion of the chain corresponds to 228–233 (GLPWQW). Residues 234-242 (GFILGFVLG) form a helical membrane-spanning segment. Residues 243-270 (AVSPAVVVPSMLLLQGGGYGVEKGVPTL) lie on the Cytoplasmic side of the membrane. Na(+) is bound by residues V244, G275, D278, and D279. A helical membrane pass occupies residues 271–290 (LMAAGSFDDILAITGFNTCL). Residues 291–300 (GIAFSTGSTV) are Extracellular-facing. Residues 301 to 324 (FNVLRGVLEVVIGVATGSVLGFFI) form a helical membrane-spanning segment. Topologically, residues 325–339 (QYFPSCDQDKLVCKR) are cytoplasmic. The chain crosses the membrane as a helical span at residues 340-357 (TFLVLGLSVLAVFSSVHF). Residues 358–361 (GFPG) are Extracellular-facing. A helical transmembrane segment spans residues 362–373 (SGGLCTLVMAFL). Residues 374 to 390 (AGMGWTSEKAEVEKIIA) lie on the Cytoplasmic side of the membrane. A helical transmembrane segment spans residues 391–411 (VAWDIFQPLLFGLIGAEVSIA). Residues 412–417 (SLRPET) are Extracellular-facing. The chain crosses the membrane as a helical span at residues 418-440 (VGLCVATVGIAVLIRILTTFLMV). The Cytoplasmic portion of the chain corresponds to 441 to 461 (CFAGFNLKEKIFISFAWLPKA). A helical transmembrane segment spans residues 462 to 473 (TVQAAIGSVALD). Residues 474-486 (TARSHGEKQLEDY) lie on the Extracellular side of the membrane. A helical membrane pass occupies residues 487–509 (GMDVLTVAFLSILITAPIGSLLI). The Cytoplasmic portion of the chain corresponds to 510–537 (GLLGPRLLQKVEHQNKDEEVQGETSVQV).

This sequence belongs to the monovalent cation:proton antiporter 1 (CPA1) transporter (TC 2.A.36) family. As to quaternary structure, homodimer; dimerization is essential for SLC9B2 activity. Lipids seem to play a role in the stabilization of the dimerization subdomain.

The protein resides in the cell membrane. The protein localises to the mitochondrion membrane. It is found in the endosome membrane. It localises to the recycling endosome membrane. Its subcellular location is the cytoplasmic vesicle. The protein resides in the secretory vesicle. The protein localises to the synaptic vesicle membrane. It is found in the basolateral cell membrane. It localises to the apical cell membrane. It carries out the reaction Li(+)(out) + H(+)(in) = Li(+)(in) + H(+)(out). The catalysed reaction is Li(+)(in) + Na(+)(out) = Li(+)(out) + Na(+)(in). The enzyme catalyses Na(+)(in) + H(+)(out) = Na(+)(out) + H(+)(in). Its activity is regulated as follows. Allosterically inhibited by the N-terminal domain. Inhibited by phloretin. In terms of biological role, electroneutral Na(+) Li(+)/H(+) antiporter that extrudes Na(+) or Li(+) in exchange for external protons across the membrane. Uses the proton gradient/membrane potential to extrude sodium. Contributes to the regulation of intracellular pH and sodium homeostasis. Also able to mediate Na(+)/Li(+) antiporter activity in kidney. May play a physiological role in renal tubular function and blood pressure homeostasis. Plays an important role for insulin secretion and clathrin-mediated endocytosis in beta-cells. Involved in sperm motility and fertility. It is controversial whether SLC9B2 plays a role in osteoclast differentiation or not. In Pongo abelii (Sumatran orangutan), this protein is Sodium/hydrogen exchanger 9B2 (SLC9B2).